The chain runs to 85 residues: Putative regulatory protein DICTH_1339 (85 aa).

The protein belongs to the RemA family.

The chain is Putative regulatory protein DICTH_1339 from Dictyoglomus thermophilum (strain ATCC 35947 / DSM 3960 / H-6-12).